Consider the following 127-residue polypeptide: Fluoride-specific ion channel FluC (127 aa).

4 helical membrane-spanning segments follow: residues 4 to 24 (SILA…FLGL), 36 to 56 (GTLL…AYFA), 68 to 88 (LIIT…AEVV), and 99 to 119 (AAGA…LGLF). 2 residues coordinate Na(+): Gly75 and Thr78.

The protein belongs to the fluoride channel Fluc/FEX (TC 1.A.43) family.

The protein resides in the cell inner membrane. The enzyme catalyses fluoride(in) = fluoride(out). With respect to regulation, na(+) is not transported, but it plays an essential structural role and its presence is essential for fluoride channel function. Functionally, fluoride-specific ion channel. Important for reducing fluoride concentration in the cell, thus reducing its toxicity. In Pseudomonas aeruginosa (strain UCBPP-PA14), this protein is Fluoride-specific ion channel FluC.